The primary structure comprises 245 residues: Demethylmenaquinone methyltransferase (245 aa).

Residues T69, D90, and 118-119 (DC) contribute to the S-adenosyl-L-methionine site.

The protein belongs to the class I-like SAM-binding methyltransferase superfamily. MenG/UbiE family.

The enzyme catalyses a 2-demethylmenaquinol + S-adenosyl-L-methionine = a menaquinol + S-adenosyl-L-homocysteine + H(+). It functions in the pathway quinol/quinone metabolism; menaquinone biosynthesis; menaquinol from 1,4-dihydroxy-2-naphthoate: step 2/2. Methyltransferase required for the conversion of demethylmenaquinol (DMKH2) to menaquinol (MKH2). This chain is Demethylmenaquinone methyltransferase, found in Porphyromonas gingivalis (strain ATCC 33277 / DSM 20709 / CIP 103683 / JCM 12257 / NCTC 11834 / 2561).